Here is a 465-residue protein sequence, read N- to C-terminus: UDP-glycosyltransferase TURAN (465 aa).

The Cytoplasmic portion of the chain corresponds to 1-75 (MGKRGRACVV…FIQYFPKILY (75 aa)). A helical membrane pass occupies residues 76-96 (PVTLLLKAFIQFTMLLWFLFV). The Lumenal segment spans residues 97–465 (KVPAPDIFLV…TQVVSQIADS (369 aa)). Asn-238 carries an N-linked (GlcNAc...) asparagine glycan.

The protein belongs to the glycosyltransferase group 1 family. Glycosyltransferase 33 subfamily.

It is found in the endoplasmic reticulum membrane. The protein operates within protein modification; protein glycosylation. Its function is as follows. Required for pollen tube (PT) growth and integrity by affecting the stability of the pollen-specific ANX1 and ANX2 proteins. Involved in protein N-glycosylation in the endoplasmic reticulum (ER), especially in the female gametophyte. Mediates PT reception in synergids through protein glycosylation. This chain is UDP-glycosyltransferase TURAN, found in Arabidopsis thaliana (Mouse-ear cress).